A 273-amino-acid chain; its full sequence is Aspartate/glutamate leucyltransferase (273 aa).

This sequence belongs to the R-transferase family. Bpt subfamily.

Its subcellular location is the cytoplasm. It carries out the reaction N-terminal L-glutamyl-[protein] + L-leucyl-tRNA(Leu) = N-terminal L-leucyl-L-glutamyl-[protein] + tRNA(Leu) + H(+). The catalysed reaction is N-terminal L-aspartyl-[protein] + L-leucyl-tRNA(Leu) = N-terminal L-leucyl-L-aspartyl-[protein] + tRNA(Leu) + H(+). Its function is as follows. Functions in the N-end rule pathway of protein degradation where it conjugates Leu from its aminoacyl-tRNA to the N-termini of proteins containing an N-terminal aspartate or glutamate. This chain is Aspartate/glutamate leucyltransferase, found in Ruegeria pomeroyi (strain ATCC 700808 / DSM 15171 / DSS-3) (Silicibacter pomeroyi).